Here is a 344-residue protein sequence, read N- to C-terminus: MSNSFNDTFLKACKGEVHDHVPVWYMRQAGRSQPEYRKIKEKYSLFEITKQPELCAYVTKLPVDQYNNDAAILYKDIMTPLPFIGVDVEIKTGKGPVIDNPIQSYADVERLGTIQPEEDVPYVLDTIKLLREQLTVPLISFAGAPFTLASYMIEGGPSKSYNKTKAFMYAEPKAWHLLMDKLGEMTITYVKAQIAAGAQAIQIFDSWVGTLNVQDYRVFVKPVMERTFSELQKEKVPLIMFGVGASHLVNEWNDLPLDVVGLDWRLQIKEARELGVTKTVQGNLDPAILLAPWEVIEARAKEILDQGLETPNFIFNLGHGVFPEVEPDTLKRLTAFVHEYSANN.

Residues 27-31 (RQAGR), F46, D76, Y151, S206, and H319 contribute to the substrate site.

The protein belongs to the uroporphyrinogen decarboxylase family. Homodimer.

Its subcellular location is the cytoplasm. The catalysed reaction is uroporphyrinogen III + 4 H(+) = coproporphyrinogen III + 4 CO2. Its pathway is porphyrin-containing compound metabolism; protoporphyrin-IX biosynthesis; coproporphyrinogen-III from 5-aminolevulinate: step 4/4. Functionally, catalyzes the decarboxylation of four acetate groups of uroporphyrinogen-III to yield coproporphyrinogen-III. The chain is Uroporphyrinogen decarboxylase from Halalkalibacterium halodurans (strain ATCC BAA-125 / DSM 18197 / FERM 7344 / JCM 9153 / C-125) (Bacillus halodurans).